A 243-amino-acid polypeptide reads, in one-letter code: Uba3-binding protein but1 (243 aa).

A disordered region spans residues 28–50 (KSTKKRRSSTKDEETRGMHPHIK).

Homodimer. Interacts with but2 and uba3.

It is found in the nucleus. Functionally, acts as a negative regulator of the NEDD8 pathway. Has a role in meiosis. This chain is Uba3-binding protein but1 (but1), found in Schizosaccharomyces pombe (strain 972 / ATCC 24843) (Fission yeast).